The following is a 535-amino-acid chain: MANLDLSKYGIVDVKEIVHNPSYDVLFAEETKPSLEGFEKGQVTELGAVNVMTGIYTGRSPKDKFFVKNEASEDSVWWTSDEYKNDNKPCSEAAWADLKAKAVKELSGKRLFVVDTFCGANEATRLKVRFIMEVAWQAHFVTNMFIRPTAEELANYGEPDFVSFNAAKAKVDNYKELGLNSETATVFNLKTKEQVILNTWYGGEMKKGIFSIMNYLNPLRGIASMHCSANTDKEGKSSAIFFGLSGTGKTTLSTDPKRLLIGDDEHGWDNEGVFNYEGGCYAKVINLDKESEPDIYNAIKRDALLENVTVAADGKIDFADKSVTENTRVSYPIYHIENIVKPVSKGPHAKQVIFLSADAFGVLPPVSILTPEQTQYYFLSGFTAKLAGTERGITEPTPTFSACFGAAFLSLHPTKYGEELVKKMEMTGAKAYLVNTGWNGSGKRISIKDTRGIIDAILDGSINEAPTKKIPYFDFEVPTALPGVDPKILDPRDTYADPAQWDEKAKDLAARFQKNFAKFTGNEAGKALVAAGPQL.

R59, Y201, and K207 together coordinate substrate. ATP-binding positions include K207, H226, and 243-251 (GLSGTGKTT). The Mn(2+) site is built by K207 and H226. D264 provides a ligand contact to Mn(2+). ATP contacts are provided by residues E292, R328, 444-445 (RI), and T450. R328 contributes to the substrate binding site.

Belongs to the phosphoenolpyruvate carboxykinase (ATP) family. Mn(2+) serves as cofactor.

It is found in the cytoplasm. It catalyses the reaction oxaloacetate + ATP = phosphoenolpyruvate + ADP + CO2. It functions in the pathway carbohydrate biosynthesis; gluconeogenesis. Functionally, involved in the gluconeogenesis. Catalyzes the conversion of oxaloacetate (OAA) to phosphoenolpyruvate (PEP) through direct phosphoryl transfer between the nucleoside triphosphate and OAA. This Parabacteroides distasonis (strain ATCC 8503 / DSM 20701 / CIP 104284 / JCM 5825 / NCTC 11152) protein is Phosphoenolpyruvate carboxykinase (ATP).